A 344-amino-acid chain; its full sequence is Inositol 2-dehydrogenase/D-chiro-inositol 3-dehydrogenase (344 aa).

Belongs to the Gfo/Idh/MocA family. In terms of assembly, homotetramer.

The catalysed reaction is myo-inositol + NAD(+) = scyllo-inosose + NADH + H(+). The enzyme catalyses 1D-chiro-inositol + NAD(+) = scyllo-inosine + NADH + H(+). Its pathway is polyol metabolism; myo-inositol degradation into acetyl-CoA; acetyl-CoA from myo-inositol: step 1/7. Involved in the oxidation of myo-inositol (MI) and D-chiro-inositol (DCI) to 2-keto-myo-inositol (2KMI or 2-inosose) and 1-keto-D-chiro-inositol (1KDCI), respectively. This Bacillus licheniformis (strain ATCC 14580 / DSM 13 / JCM 2505 / CCUG 7422 / NBRC 12200 / NCIMB 9375 / NCTC 10341 / NRRL NRS-1264 / Gibson 46) protein is Inositol 2-dehydrogenase/D-chiro-inositol 3-dehydrogenase.